The sequence spans 434 residues: Trigger factor (434 aa).

A PPIase FKBP-type domain is found at 160 to 245 (GDKVKMNFVG…LTEVQAANLP (86 aa)).

The protein belongs to the FKBP-type PPIase family. Tig subfamily.

The protein resides in the cytoplasm. The catalysed reaction is [protein]-peptidylproline (omega=180) = [protein]-peptidylproline (omega=0). Involved in protein export. Acts as a chaperone by maintaining the newly synthesized protein in an open conformation. Functions as a peptidyl-prolyl cis-trans isomerase. The protein is Trigger factor of Shewanella baltica (strain OS185).